A 293-amino-acid chain; its full sequence is MWQQLMVTVDEDLAEDVSDALMDAGALSVSFLDAGDQPLFEPPPGTTPVWAQTRVVGLFEEGGDLAAIRSALGGRFGDERLRDWSEEALADQVWERTWLEHFRPMRFGSRLWVCPTGFTVEDTDAVVMSLDPGLAFGTGTHPTTALCLEWLDAADLQGASVLDYGCGSGILGIAAALLGAAGVHAVDIDPQALAATVENARKNRVGDRIEVASPGGLADFDSDIALANILANPLMELADALRSRVRPGGRIVLSGILAEQADAVASVYARKGFEMEPAVFREGWVRLAGVRRT.

4 residues coordinate S-adenosyl-L-methionine: T144, G165, D187, and N228.

Belongs to the methyltransferase superfamily. PrmA family.

The protein localises to the cytoplasm. The enzyme catalyses L-lysyl-[protein] + 3 S-adenosyl-L-methionine = N(6),N(6),N(6)-trimethyl-L-lysyl-[protein] + 3 S-adenosyl-L-homocysteine + 3 H(+). In terms of biological role, methylates ribosomal protein L11. This is Ribosomal protein L11 methyltransferase from Methylococcus capsulatus (strain ATCC 33009 / NCIMB 11132 / Bath).